The primary structure comprises 513 residues: Ankyrin repeat domain-containing protein 13C-B (513 aa).

The segment covering 1-19 (MTGEKIRSLHRDQKPSKDE) has biased composition (basic and acidic residues). 2 disordered regions span residues 1–34 (MTGEKIRSLHRDQKPSKDEDLLEPDEEATADGTF) and 55–77 (PSNPALLQNHHHHHQQQISPMTP). A compositionally biased stretch (acidic residues) spans 20–29 (DLLEPDEEAT). ANK repeat units follow at residues 83–114 (DVYFPVHECVIKGDIRKLSSLIRSHNIGQKDN), 115–144 (HGNTPLHLAVMLGNKECAHLLLAHNAPVKV), and 148–177 (QGWSPLAEAISYGDRQMITALLRKLKQQSR).

Its subcellular location is the endoplasmic reticulum membrane. Its function is as follows. Acts as a molecular chaperone for G protein-coupled receptors, regulating their biogenesis and exit from the ER. This is Ankyrin repeat domain-containing protein 13C-B (ankrd13c-b) from Xenopus laevis (African clawed frog).